The sequence spans 656 residues: DNA ligase (656 aa).

Residues D32–D36 and S81–L82 each bind NAD(+). K112 (N6-AMP-lysine intermediate) is an active-site residue. Positions 133, 167, and 306 each coordinate NAD(+). C400, C403, C416, and C421 together coordinate Zn(2+). In terms of domain architecture, BRCT spans K577 to D656.

This sequence belongs to the NAD-dependent DNA ligase family. LigA subfamily. The cofactor is Mg(2+). Mn(2+) serves as cofactor.

It carries out the reaction NAD(+) + (deoxyribonucleotide)n-3'-hydroxyl + 5'-phospho-(deoxyribonucleotide)m = (deoxyribonucleotide)n+m + AMP + beta-nicotinamide D-nucleotide.. In terms of biological role, DNA ligase that catalyzes the formation of phosphodiester linkages between 5'-phosphoryl and 3'-hydroxyl groups in double-stranded DNA using NAD as a coenzyme and as the energy source for the reaction. It is essential for DNA replication and repair of damaged DNA. In Helicobacter pylori (strain P12), this protein is DNA ligase.